Consider the following 703-residue polypeptide: Fibulin-1 (703 aa).

Positions 1–29 are cleaved as a signal peptide; the sequence is MERAAPSRRVPLPLLLLGGLALLAAGVDA. 35 disulfides stabilise this stretch: Cys-36–Cys-61, Cys-37–Cys-68, Cys-50–Cys-69, Cys-78–Cys-109, Cys-91–Cys-110, Cys-112–Cys-136, Cys-113–Cys-143, Cys-126–Cys-144, Cys-180–Cys-190, Cys-186–Cys-199, Cys-201–Cys-214, Cys-220–Cys-233, Cys-227–Cys-242, Cys-248–Cys-260, Cys-266–Cys-279, Cys-273–Cys-288, Cys-294–Cys-306, Cys-312–Cys-325, Cys-319–Cys-334, Cys-341–Cys-354, Cys-360–Cys-373, Cys-367–Cys-382, Cys-384–Cys-397, Cys-403–Cys-415, Cys-411–Cys-424, Cys-426–Cys-439, Cys-445–Cys-454, Cys-450–Cys-463, Cys-465–Cys-479, Cys-485–Cys-498, Cys-494–Cys-507, Cys-509–Cys-523, Cys-529–Cys-542, Cys-536–Cys-551, and Cys-556–Cys-577. 3 Anaphylatoxin-like domains span residues 36-76, 77-111, and 112-144; these read CCAD…LEEL, HCAT…RCCH, and CCLL…QACC. An N-linked (GlcNAc...) (complex) asparagine glycan is attached at Asn-98. The region spanning 176–215 is the EGF-like 1 domain; the sequence is LNDRCRGGGPCKQQCRDTGDEVVCSCFVGYQLLSDGVSCE. An EGF-like 2; calcium-binding domain is found at 216–261; the sequence is DVNECITGSHSCRLGESCINTVGSFRCQRDSSCGTGYELTEDNSCK. One can recognise an EGF-like 3; calcium-binding domain in the interval 262-307; sequence DIDECESGIHNCLPDFICQNTLGSFRCRPKLQCKSGFIQDALGNCI. Residues 308–355 form the EGF-like 4; calcium-binding domain; it reads DINECLSISAPCPIGHTCINTEGSYTCQKNVPNCGRGYHLNEEGTRCV. Residues 356–398 form the EGF-like 5; calcium-binding domain; sequence DVDECAPPAEPCGKGHRCVNSPGSFRCECKTGYYFDGISRMCV. The self-association and FN1-binding; calcium is necessary for homotypic binding, but not for heterotypic binding stretch occupies residues 356-440; the sequence is DVDECAPPAE…RLSVDGRSCE (85 aa). In terms of domain architecture, EGF-like 6; calcium-binding spans 399–440; that stretch reads DVNECQRYPGRLCGHKCENTLGSYLCSCSVGFRLSVDGRSCE. An EGF-like 7; calcium-binding domain is found at 441–480; that stretch reads DINECSSSPCSQECANVYGSYQCYCRRGYQLSDVDGVTCE. Positions 481–524 constitute an EGF-like 8; calcium-binding domain; the sequence is DIDECALPTGGHICSYRCINIPGSFQCSCPSSGYRLAPNGRNCQ. The region spanning 525–578 is the EGF-like 9; calcium-binding domain; sequence DIDECVTGIHNCSINETCFNIQGGFRCLAFECPENYRRSAATLQQEKTDTVRCI. 2 N-linked (GlcNAc...) asparagine glycosylation sites follow: Asn-535 and Asn-539.

It belongs to the fibulin family. In terms of assembly, homomultimerizes and interacts with various extracellular matrix components such as FN1, LAMA1, LAMA2, NID, ACAN, CSPG2 and type IV collagen. Also interacts with APP and FGB. Interacts with FBLN7. Interacts with CCN3. (Microbial infection) Interacts with human papillomavirus/HPV type 16, 18 and 31 proteins E6. Isoform A and isoform B are only expressed in placenta. Isoform C and isoform D are expressed in a variety of tissues and cultured cells.

It is found in the secreted. Its subcellular location is the extracellular space. The protein resides in the extracellular matrix. Incorporated into fibronectin-containing matrix fibers. May play a role in cell adhesion and migration along protein fibers within the extracellular matrix (ECM). Could be important for certain developmental processes and contribute to the supramolecular organization of ECM architecture, in particular to those of basement membranes. Has been implicated in a role in cellular transformation and tumor invasion, it appears to be a tumor suppressor. May play a role in haemostasis and thrombosis owing to its ability to bind fibrinogen and incorporate into clots. Could play a significant role in modulating the neurotrophic activities of APP, particularly soluble APP. The polypeptide is Fibulin-1 (FBLN1) (Homo sapiens (Human)).